The sequence spans 420 residues: Pregnancy-associated glycoprotein 2 (420 aa).

The first 15 residues, 1–15, serve as a signal peptide directing secretion; that stretch reads MKWLVILGLVALSDC. Asn56 and Asn79 each carry an N-linked (GlcNAc...) asparagine glycan. A Peptidase A1 domain is found at 76–417; sequence YVGNISIGTP…DEGQNRIGLA (342 aa). Residue Asp94 is part of the active site. 2 disulfide bridges follow: Cys107-Cys112 and Cys268-Cys272. Asp277 is a catalytic residue. Residues Cys341 and Cys376 are joined by a disulfide bond.

The protein belongs to the peptidase A1 family. Expressed throughout the chorion, with the signal localized exclusively over the trophectoderm.

Its subcellular location is the secreted. It is found in the extracellular space. The chain is Pregnancy-associated glycoprotein 2 (PAG2) from Sus scrofa (Pig).